Consider the following 88-residue polypeptide: U24 protein (88 aa).

Threonine 6 carries the phosphothreonine modification. The short motif at 8-11 (PPSY) is the PPXY motif element. Residues 58–78 (FAFLVLTGLAIAMILFIAFVI) traverse the membrane as a helical segment.

In terms of assembly, interacts with host ITCH; this interaction probably mediates ITCH degradation. Interacts probably with NEDD4.

It is found in the membrane. In terms of biological role, down-regulates the TCR/CD3E complex and the transferrin receptor TFRC in host T-cells by blocking them from recycling back to the cell surface. The protein is U24 protein (U24) of Human herpesvirus 6B (strain Z29) (HHV-6 variant B).